The primary structure comprises 286 residues: S-methyl-5'-thioadenosine phosphorylase (286 aa).

Phosphate contacts are provided by residues S11, 53–54 (RH), and 86–87 (SA). M185 contributes to the substrate binding site. T186 contributes to the phosphate binding site. Substrate is bound at residue 209–211 (DYD).

It belongs to the PNP/MTAP phosphorylase family. MTAP subfamily. Homohexamer. Dimer of a homotrimer.

It carries out the reaction S-methyl-5'-thioadenosine + phosphate = 5-(methylsulfanyl)-alpha-D-ribose 1-phosphate + adenine. Its pathway is amino-acid biosynthesis; L-methionine biosynthesis via salvage pathway; S-methyl-5-thio-alpha-D-ribose 1-phosphate from S-methyl-5'-thioadenosine (phosphorylase route): step 1/1. Its function is as follows. Catalyzes the reversible phosphorylation of S-methyl-5'-thioadenosine (MTA) to adenine and 5-methylthioribose-1-phosphate. Involved in the breakdown of MTA, a major by-product of polyamine biosynthesis. Responsible for the first step in the methionine salvage pathway after MTA has been generated from S-adenosylmethionine. Has broad substrate specificity with 6-aminopurine nucleosides as preferred substrates. The protein is S-methyl-5'-thioadenosine phosphorylase of Geobacter sulfurreducens (strain ATCC 51573 / DSM 12127 / PCA).